A 496-amino-acid polypeptide reads, in one-letter code: Cobyric acid synthase (496 aa).

In terms of domain architecture, GATase cobBQ-type spans 264-458 (HTRIAVVAYP…LHGLFEDAAV (195 aa)). The active-site Nucleophile is the Cys345. His450 is a catalytic residue.

This sequence belongs to the CobB/CobQ family. CobQ subfamily.

It functions in the pathway cofactor biosynthesis; adenosylcobalamin biosynthesis. Catalyzes amidations at positions B, D, E, and G on adenosylcobyrinic A,C-diamide. NH(2) groups are provided by glutamine, and one molecule of ATP is hydrogenolyzed for each amidation. This Acidovorax ebreus (strain TPSY) (Diaphorobacter sp. (strain TPSY)) protein is Cobyric acid synthase.